We begin with the raw amino-acid sequence, 207 residues long: MNRPQGEPAKALRLPAALLYAEPLPEDLVEVGYVGAAYGIRGWIKVQPHADDASALLHARRWWLLSPPQAGLVAADAARSQPVCVKIAQSREHSGTVVAQAAGVADRNLAEALRGRRVWIRRADFPAPDEDEFYWVDLIGCNVSNEQGELLGEVSGLIDNGAHQILQVAFVQPDGKAGERLIPFVDAFLREVDTAGKRIVVDWGLDY.

A PRC barrel domain is found at 130–207 (EDEFYWVDLI…RIVVDWGLDY (78 aa)).

Belongs to the RimM family. In terms of assembly, binds ribosomal protein uS19.

Its subcellular location is the cytoplasm. In terms of biological role, an accessory protein needed during the final step in the assembly of 30S ribosomal subunit, possibly for assembly of the head region. Essential for efficient processing of 16S rRNA. May be needed both before and after RbfA during the maturation of 16S rRNA. It has affinity for free ribosomal 30S subunits but not for 70S ribosomes. The sequence is that of Ribosome maturation factor RimM from Cupriavidus taiwanensis (strain DSM 17343 / BCRC 17206 / CCUG 44338 / CIP 107171 / LMG 19424 / R1) (Ralstonia taiwanensis (strain LMG 19424)).